We begin with the raw amino-acid sequence, 3241 residues long: PHD finger protein rhinoceros (3241 aa).

Residues 1-16 (MSQRGKRGNQQHHQSH) show a composition bias toward basic residues. The tract at residues 1-126 (MSQRGKRGNQ…GASSSSSWQA (126 aa)) is disordered. Composition is skewed to low complexity over residues 42–55 (PPNGATTAAVAEVT) and 90–126 (RAAAGATSTSKSKSTKLAKSASKCKSQGASSSSSWQA). The PHD-type 1 zinc finger occupies 312–362 (NVICDVCRSPDSEEANEMVFCDNCNICVHQACYGITAIPSGQWLCRTCSMG). A C2HC pre-PHD-type zinc finger spans residues 364 to 398 (KPDCVLCPNKGGAMKSNKSGKHWAHVSCALWIPEV). The PHD-type 2 zinc-finger motif lies at 422–481 (LICVLCRKRVGSCIQCSVKPCKTAYHVTCAFQHGLEMRAIIEEGNAEDGVKLRSYCQKHS). Disordered regions lie at residues 482 to 501 (MSKGKKENAGSHGGGSASVA), 508 to 554 (NRYG…ARAQ), 737 to 1266 (SGKQ…VATP), 1279 to 1483 (PQRQ…STKV), 1500 to 1613 (PKTN…SETR), and 1632 to 1746 (NLGA…QHLL). The span at 540 to 554 (KTELTSEERNQARAQ) shows a compositional bias: basic and acidic residues. Over residues 762-777 (KKLNNGILSSRTSSPE) the composition is skewed to polar residues. A compositionally biased stretch (low complexity) spans 807–874 (KSSAAAATST…SGSSSAGSGV (68 aa)). Positions 931 to 943 (ERCRNRQEPERGA) are enriched in basic and acidic residues. The span at 949-965 (QSKSVPNRSQASRSKPT) shows a compositional bias: polar residues. The span at 995–1007 (DADESVSSDESEE) shows a compositional bias: acidic residues. Positions 1019 to 1031 (STTTSGLATTGSA) are enriched in low complexity. Residues 1060-1075 (TVESNVSDSQNQQTIR) are compositionally biased toward polar residues. The span at 1087–1104 (TAATTSSTSQAASSTSKA) shows a compositional bias: low complexity. Composition is skewed to polar residues over residues 1117-1126 (IGNSTKTKPN) and 1151-1163 (NMRSTNLATTLQP). A compositionally biased stretch (basic and acidic residues) spans 1184-1211 (KVKDSSSRVSNEADKSSLEKVRPKEHLQ). A compositionally biased stretch (polar residues) spans 1313–1327 (VTSATISGSGSSVPA). At threonine 1346 the chain carries Phosphothreonine. Position 1352 is a phosphoserine (serine 1352). Threonine 1364 is modified (phosphothreonine). Positions 1382 to 1426 (SSSSSGDSESSSSSSSSGSSSSSGGSDSDSESQASNSENPSSREP) are enriched in low complexity. Residue threonine 1456 is modified to Phosphothreonine. A compositionally biased stretch (polar residues) spans 1463 to 1483 (NVLNIPSTRSRQNSTTKSTKV). Basic and acidic residues predominate over residues 1541–1558 (SPEKTVSRCKSRAEESPK). The span at 1576 to 1594 (KGTSSLDKLLNKKQQQMNH) shows a compositional bias: polar residues. Over residues 1599 to 1608 (TPPPISPTPP) the composition is skewed to pro residues. Over residues 1664-1675 (TAPTRTQLSASA) the composition is skewed to polar residues. A compositionally biased stretch (pro residues) spans 1688 to 1699 (PAAPLPASPTPT). A compositionally biased stretch (basic residues) spans 1717-1731 (RRMRWRSRRRRRRRS). 2 coiled-coil regions span residues 1741–1770 (HTQHLLNEMEMARELEEERKNELLANASKY) and 1893–1925 (SEEDSIQATRNLLEKLRKTKRKAQDDCSSKEAV). Disordered regions lie at residues 2037–2061 (LEKSPHQKGACPLSSNGGANVGQPA), 2124–2148 (AERRSSSPSSVSESNDPPQPPPVVT), 2203–2227 (NNTNTTQHQPTTPAHQQQQQRTPNN), 2346–2454 (TPPV…GGVT), 2598–2629 (ATGTGTSPSKQHSGPTALVAPPTGPNPTPAPN), 2667–2691 (SEEVSIDSDSTIPHSKTSTSDARSQ), 2768–2811 (NDDS…NSSS), 2832–2911 (GAGA…SVDE), 2964–3015 (NKRG…TTTM), 3042–3169 (KAET…EAAM), and 3184–3241 (VNVG…CEVR). Positions 2359–2381 (KRTSVSGSNLSKKQTHKSPQLPQ) are enriched in polar residues. Residues 2392–2402 (PLQPPTPPAPV) show a composition bias toward pro residues. A compositionally biased stretch (gly residues) spans 2430–2439 (GSGGSGAPGR). 2 stretches are compositionally biased toward polar residues: residues 2598–2611 (ATGTGTSPSKQHSG) and 2673–2689 (DSDSTIPHSKTSTSDAR). Residues 2855–2865 (NNDNNGKTGAA) are compositionally biased toward polar residues. Basic and acidic residues predominate over residues 2876-2887 (KTLESSEDDHQA). Serine 2880 and serine 2881 each carry phosphoserine. The segment covering 2899–2911 (ANETPSGVSSVDE) has biased composition (polar residues). Over residues 2964–2974 (NKRGVVVKDGE) the composition is skewed to basic and acidic residues. The segment covering 2984 to 3002 (KRPKSSKPKKEKKEKKRQK) has biased composition (basic residues). Residues 3003-3015 (QQQLILSSSTTTM) are compositionally biased toward low complexity. Phosphoserine is present on residues serine 3104 and serine 3110. Composition is skewed to polar residues over residues 3115–3130 (LLNSFTPHSQNANTSP) and 3184–3197 (VNVGNYENSNNSLP). The segment covering 3198-3218 (SASGTGSASSNSCNSNSINNN) has biased composition (low complexity). The segment covering 3219-3230 (GSGGGRASGEGG) has biased composition (gly residues).

The protein belongs to the JADE family.

It localises to the nucleus. May function as a negative regulator of the EGFR/Ras/MAPK signaling pathway during eye development. The protein is PHD finger protein rhinoceros (rno) of Drosophila melanogaster (Fruit fly).